A 1126-amino-acid polypeptide reads, in one-letter code: Protein translocase subunit SecA (1126 aa).

Residues glutamine 175, 193–197 (GEGKT), and aspartate 694 contribute to the ATP site. The segment at 1060–1126 (VQEAAPEKHE…KYKNCHGQGL (67 aa)) is disordered. The segment covering 1064 to 1080 (APEKHEDMSRYRTEKTD) has biased composition (basic and acidic residues). Zn(2+) is bound by residues cysteine 1110, cysteine 1112, cysteine 1121, and histidine 1122.

Belongs to the SecA family. As to quaternary structure, monomer and homodimer. Part of the essential Sec protein translocation apparatus which comprises SecA, SecYEG and auxiliary proteins SecDF. Other proteins may also be involved. Zn(2+) is required as a cofactor.

It localises to the cell inner membrane. It is found in the cytoplasm. The catalysed reaction is ATP + H2O + cellular proteinSide 1 = ADP + phosphate + cellular proteinSide 2.. Functionally, part of the Sec protein translocase complex. Interacts with the SecYEG preprotein conducting channel. Has a central role in coupling the hydrolysis of ATP to the transfer of proteins into and across the cell membrane, serving as an ATP-driven molecular motor driving the stepwise translocation of polypeptide chains across the membrane. The sequence is that of Protein translocase subunit SecA from Parabacteroides distasonis (strain ATCC 8503 / DSM 20701 / CIP 104284 / JCM 5825 / NCTC 11152).